Reading from the N-terminus, the 208-residue chain is FMN-dependent NADH:quinone oxidoreductase 1 (208 aa).

S10 contacts FMN.

Belongs to the azoreductase type 1 family. As to quaternary structure, homodimer. The cofactor is FMN.

It catalyses the reaction 2 a quinone + NADH + H(+) = 2 a 1,4-benzosemiquinone + NAD(+). The enzyme catalyses N,N-dimethyl-1,4-phenylenediamine + anthranilate + 2 NAD(+) = 2-(4-dimethylaminophenyl)diazenylbenzoate + 2 NADH + 2 H(+). Its function is as follows. Quinone reductase that provides resistance to thiol-specific stress caused by electrophilic quinones. Contributes to resistance to 2-methylhydroquinone (2-MHQ) and catechol. In terms of biological role, also exhibits azoreductase activity. Catalyzes the reductive cleavage of the azo bond in aromatic azo compounds to the corresponding amines. In Bacillus subtilis (strain 168), this protein is FMN-dependent NADH:quinone oxidoreductase 1.